A 279-amino-acid polypeptide reads, in one-letter code: Tryptophan synthase alpha chain (279 aa).

Active-site proton acceptor residues include E50 and D61.

It belongs to the TrpA family. As to quaternary structure, tetramer of two alpha and two beta chains.

The enzyme catalyses (1S,2R)-1-C-(indol-3-yl)glycerol 3-phosphate + L-serine = D-glyceraldehyde 3-phosphate + L-tryptophan + H2O. It participates in amino-acid biosynthesis; L-tryptophan biosynthesis; L-tryptophan from chorismate: step 5/5. The alpha subunit is responsible for the aldol cleavage of indoleglycerol phosphate to indole and glyceraldehyde 3-phosphate. The sequence is that of Tryptophan synthase alpha chain from Sinorhizobium medicae (strain WSM419) (Ensifer medicae).